A 440-amino-acid chain; its full sequence is Argininosuccinate lyase (440 aa).

Belongs to the lyase 1 family. Argininosuccinate lyase subfamily.

Its subcellular location is the cytoplasm. It carries out the reaction 2-(N(omega)-L-arginino)succinate = fumarate + L-arginine. The protein operates within amino-acid biosynthesis; L-arginine biosynthesis; L-arginine from L-ornithine and carbamoyl phosphate: step 3/3. This is Argininosuccinate lyase from Clostridium botulinum (strain Langeland / NCTC 10281 / Type F).